A 784-amino-acid polypeptide reads, in one-letter code: 5-methyltetrahydropteroyltriglutamate--homocysteine methyltransferase (784 aa).

Residues 16–19 (RELK) and Lys112 contribute to the 5-methyltetrahydropteroyltri-L-glutamate site. L-homocysteine is bound by residues 460–462 (IGS) and Glu513. L-methionine-binding positions include 460–462 (IGS) and Glu513. Trp590 lines the 5-methyltetrahydropteroyltri-L-glutamate pocket. Asp628 contacts L-homocysteine. Asp628 provides a ligand contact to L-methionine. Residue Glu634 coordinates 5-methyltetrahydropteroyltri-L-glutamate. His670, Cys672, and Glu694 together coordinate Zn(2+). The active-site Proton donor is His723. Cys755 is a Zn(2+) binding site.

It belongs to the vitamin-B12 independent methionine synthase family. It depends on Zn(2+) as a cofactor.

It catalyses the reaction 5-methyltetrahydropteroyltri-L-glutamate + L-homocysteine = tetrahydropteroyltri-L-glutamate + L-methionine. It functions in the pathway amino-acid biosynthesis; L-methionine biosynthesis via de novo pathway; L-methionine from L-homocysteine (MetE route): step 1/1. Catalyzes the transfer of a methyl group from 5-methyltetrahydrofolate to homocysteine resulting in methionine formation. The polypeptide is 5-methyltetrahydropteroyltriglutamate--homocysteine methyltransferase (Acidithiobacillus ferrooxidans (strain ATCC 23270 / DSM 14882 / CIP 104768 / NCIMB 8455) (Ferrobacillus ferrooxidans (strain ATCC 23270))).